The chain runs to 1277 residues: Neural cell adhesion molecule L1 (1277 aa).

Positions Met-1–Ala-34 are cleaved as a signal peptide. The Extracellular segment spans residues Ala-35–Trp-1135. Ig-like C2-type domains follow at residues Pro-51–Ser-140, Pro-150–Thr-241, Pro-256–Thr-344, Pro-349–Tyr-437, and Pro-443–Glu-528. 5 cysteine pairs are disulfide-bonded: Cys-72–Cys-129, Cys-173–Cys-224, Cys-280–Cys-328, Cys-370–Cys-421, and Cys-465–Cys-514. N-linked (GlcNAc...) asparagine glycosylation is present at Asn-317. Residues Asn-503, Asn-520, and Asn-531 are each glycosylated (N-linked (GlcNAc...) asparagine). Residues Arg-532–Thr-623 enclose the Ig-like C2-type 6 domain. Cys-554 and Cys-607 form a disulfide bridge. Fibronectin type-III domains are found at residues Pro-630–Asp-725, Asn-730–Asp-824, Ala-829–Gly-931, Pro-935–Gly-1030, and Pro-1032–Ser-1129. The interval Ser-714–Asp-740 is disordered. N-linked (GlcNAc...) asparagine glycosylation is found at Asn-794 and Asn-839. N-linked (GlcNAc...) asparagine glycans are attached at residues Asn-1035, Asn-1046, Asn-1068, Asn-1083, and Asn-1108. Residues Phe-1136–Ile-1156 traverse the membrane as a helical segment. The Cytoplasmic portion of the chain corresponds to Lys-1157–Asn-1277. 2 disordered regions span residues Lys-1163–Glu-1216 and Asn-1232–Asn-1277. Basic and acidic residues predominate over residues Ser-1165 to Thr-1201. The segment covering Asn-1232–Ser-1242 has biased composition (polar residues). Residues Pro-1255 to Asn-1277 are compositionally biased toward low complexity.

It belongs to the immunoglobulin superfamily. L1/neurofascin/NgCAM family.

The protein localises to the cell membrane. It is found in the cell projection. It localises to the growth cone. Its function is as follows. Neural cell adhesion molecule involved in the dynamics of cell adhesion and in the generation of transmembrane signals at tyrosine kinase receptors. During brain development, critical in multiple processes, including neuronal migration, axonal growth and fasciculation, and synaptogenesis. In the mature brain, plays a role in the dynamics of neuronal structure and function, including synaptic plasticity. The sequence is that of Neural cell adhesion molecule L1 (l1cam) from Takifugu rubripes (Japanese pufferfish).